A 103-amino-acid chain; its full sequence is Co-chaperonin GroES (103 aa).

The protein belongs to the GroES chaperonin family. Heptamer of 7 subunits arranged in a ring. Interacts with the chaperonin GroEL.

It localises to the cytoplasm. Functionally, together with the chaperonin GroEL, plays an essential role in assisting protein folding. The GroEL-GroES system forms a nano-cage that allows encapsulation of the non-native substrate proteins and provides a physical environment optimized to promote and accelerate protein folding. GroES binds to the apical surface of the GroEL ring, thereby capping the opening of the GroEL channel. This is Co-chaperonin GroES from Prochlorococcus marinus (strain MIT 9211).